The following is a 572-amino-acid chain: Acyl-coenzyme A synthetase ACSM2, mitochondrial (572 aa).

The transit peptide at Met1–Phe46 directs the protein to the mitochondrion. Gln139 is a binding site for CoA. ATP-binding positions include Thr221–Lys229, Glu359–Thr364, Asp446, and Arg461. Substrate is bound at residue Thr364. Residue Ser469–Tyr471 participates in CoA binding. Arg472 contacts substrate. CoA is bound by residues Arg501, Lys532, and Tyr540–Arg542. Lys557 is a binding site for ATP.

The protein belongs to the ATP-dependent AMP-binding enzyme family. As to quaternary structure, monomer. It depends on Mg(2+) as a cofactor. The cofactor is Mn(2+). Detected in kidney, in proximal tubules.

It is found in the mitochondrion. The enzyme catalyses a medium-chain fatty acid + ATP + CoA = a medium-chain fatty acyl-CoA + AMP + diphosphate. The catalysed reaction is benzoate + ATP + CoA = benzoyl-CoA + AMP + diphosphate. It catalyses the reaction hexanoate + ATP + CoA = hexanoyl-CoA + AMP + diphosphate. It carries out the reaction butanoate + ATP + CoA = butanoyl-CoA + AMP + diphosphate. The enzyme catalyses octanoate + ATP + CoA = octanoyl-CoA + AMP + diphosphate. The catalysed reaction is decanoate + ATP + CoA = decanoyl-CoA + AMP + diphosphate. Functionally, catalyzes the activation of fatty acids by CoA to produce an acyl-CoA, the first step in fatty acid metabolism. Capable of activating medium-chain fatty acids (e.g. butyric (C4) to decanoic (C10) acids), and certain carboxylate-containing xenobiotics, e.g. benzoate. The protein is Acyl-coenzyme A synthetase ACSM2, mitochondrial (Acsm2) of Rattus norvegicus (Rat).